A 40-amino-acid chain; its full sequence is Alpha-conotoxin-like Qc1.4b (40 aa).

The propeptide occupies 1 to 19 (SDGRNTAANDKASDLMALR). 2 disulfide bridges follow: Cys-22-Cys-28 and Cys-23-Cys-36. A lacks the Ser-Xaa-Pro motif that is crucial for potent interaction with nAChR region spans residues 24-26 (PNP). Cys-36 is subject to Cysteine amide. Residues 37–40 (GGGR) constitute a propeptide that is removed on maturation.

Belongs to the conotoxin A superfamily. As to expression, expressed by the venom duct.

It is found in the secreted. Alpha-conotoxins act on postsynaptic membranes, they bind to the nicotinic acetylcholine receptors (nAChR) and thus inhibit them. Has possibly a distinct nAChR binding mode from other alpha-conotoxins, due to a different three residue motif (lacks the Ser-Xaa-Pro motif). The polypeptide is Alpha-conotoxin-like Qc1.4b (Conus quercinus (Oak cone)).